The sequence spans 243 residues: Variant surface antigen E (243 aa).

Residues 1 to 29 (MKKSIFSKKLLVSFGSLVTLAAIPLIAIS) form the signal peptide. The N-palmitoyl cysteine moiety is linked to residue Cys-30. Residue Cys-30 is the site of S-diacylglycerol cysteine attachment. Positions 34–243 (TDNLSQSQQP…TTSDGQNQNK (210 aa)) are disordered. The span at 52–92 (GTNTENGSNNGSGSGTTNSSGGTNQSGSASGNGSSNSSVST) shows a compositional bias: low complexity. The segment covering 93–243 (PDGQHSNPSN…TTSDGQNQNK (151 aa)) has biased composition (polar residues). 11 consecutive repeat copies span residues 97-109 (HSNPSNPTTSDPK), 110-122 (ESNPSNPTTSDPK), 123-135 (ESNPSNPTTSDGQ), 136-148 (HSNPSNPTTSDPK), 149-161 (ESNPSNPTTSDGQ), 162-174 (HSNPSNPTTSDGQ), 175-187 (HSNPSNPTTSDGQ), 188-200 (HSNPSNPTTSDGQ), 201-213 (HSNPSNPTTSDGQ), 214-226 (HSNPSNPTTSDGQ), and 227-239 (HSNPSNPTTSDGQ). The tract at residues 97–239 (HSNPSNPTTS…PSNPTTSDGQ (143 aa)) is 11 X 13 AA tandem repeats.

The protein localises to the cell membrane. Responsible for the antigenic diversity for host adaptation. Expression in E.coli of a construct containing vlpD, vlpE, and vlpF yields antigenically distinguishable products corresponding to each gene. In Mesomycoplasma hyorhinis (Mycoplasma hyorhinis), this protein is Variant surface antigen E (vlpE).